The sequence spans 200 residues: MLSASEGEQTVRLARNTIESFLKDGEQSDSIDLPEVFGELRGVFVTLTKNGNLRGCIGHPYADSVLESAIVDSAISAATRDPRFPMVDISEMSDIIVEVTVLTQPELVDVLPDKLPEVIEIGRHGLIAKMGMYQGLLLPQVAPENDFDAIDLLNHTCLKAGLPQDAWLTGAQMYWFEGQIFKEVEPRGDIEENKFNSCCK.

Residues 5–192 enclose the AMMECR1 domain; that stretch reads SEGEQTVRLA…EVEPRGDIEE (188 aa).

This Methanococcoides burtonii (strain DSM 6242 / NBRC 107633 / OCM 468 / ACE-M) protein is Protein Mbur_1344.